We begin with the raw amino-acid sequence, 948 residues long: Isoleucine--tRNA ligase (948 aa).

The 'HIGH' region motif lies at 58-68; the sequence is PYANGDIHIGH. Glu-566 contacts L-isoleucyl-5'-AMP. A 'KMSKS' region motif is present at residues 607–611; sequence KMSKS. Residue Lys-610 participates in ATP binding. Zn(2+) contacts are provided by Cys-911, Cys-914, Cys-931, and Cys-934.

It belongs to the class-I aminoacyl-tRNA synthetase family. IleS type 1 subfamily. Monomer. Zn(2+) is required as a cofactor.

It is found in the cytoplasm. The enzyme catalyses tRNA(Ile) + L-isoleucine + ATP = L-isoleucyl-tRNA(Ile) + AMP + diphosphate. Catalyzes the attachment of isoleucine to tRNA(Ile). As IleRS can inadvertently accommodate and process structurally similar amino acids such as valine, to avoid such errors it has two additional distinct tRNA(Ile)-dependent editing activities. One activity is designated as 'pretransfer' editing and involves the hydrolysis of activated Val-AMP. The other activity is designated 'posttransfer' editing and involves deacylation of mischarged Val-tRNA(Ile). In Vibrio vulnificus (strain YJ016), this protein is Isoleucine--tRNA ligase.